The following is a 469-amino-acid chain: L-seryl-tRNA(Sec) selenium transferase (469 aa).

N6-(pyridoxal phosphate)lysine is present on K298.

Belongs to the SelA family. The cofactor is pyridoxal 5'-phosphate.

It localises to the cytoplasm. It carries out the reaction L-seryl-tRNA(Sec) + selenophosphate + H(+) = L-selenocysteinyl-tRNA(Sec) + phosphate. It participates in aminoacyl-tRNA biosynthesis; selenocysteinyl-tRNA(Sec) biosynthesis; selenocysteinyl-tRNA(Sec) from L-seryl-tRNA(Sec) (bacterial route): step 1/1. In terms of biological role, converts seryl-tRNA(Sec) to selenocysteinyl-tRNA(Sec) required for selenoprotein biosynthesis. This chain is L-seryl-tRNA(Sec) selenium transferase, found in Nitratidesulfovibrio vulgaris (strain ATCC 29579 / DSM 644 / CCUG 34227 / NCIMB 8303 / VKM B-1760 / Hildenborough) (Desulfovibrio vulgaris).